The following is a 250-amino-acid chain: uncharacterized protein (250 aa).

6 residues coordinate NAD(+): Ser-15, Leu-17, Asp-36, Asp-56, Val-57, and Cys-82. Ser-143 lines the substrate pocket. Residues Tyr-156, Lys-160, Phe-189, and Thr-191 each contribute to the NAD(+) site. Catalysis depends on Tyr-156, which acts as the Proton acceptor.

This sequence belongs to the short-chain dehydrogenases/reductases (SDR) family.

This is an uncharacterized protein from Mycobacterium tuberculosis (strain CDC 1551 / Oshkosh).